A 254-amino-acid chain; its full sequence is Pre-miRNA 5'-monophosphate methyltransferase (254 aa).

The Bin3-type SAM domain maps to 34-254 (ENRLSLIPEA…DRSLLLFRRQ (221 aa)). S-adenosyl-L-methionine is bound by residues Arg-36, Asn-66, Asp-99, and 124 to 125 (DI).

This sequence belongs to the methyltransferase superfamily.

Its subcellular location is the cytoplasm. The catalysed reaction is a 5'-end 5'-phospho-ribonucleoside-RNA + S-adenosyl-L-methionine = a 5'-end (5'-methylphospho)-ribonucleoside-RNA + S-adenosyl-L-homocysteine. It carries out the reaction a 5'-end 5'-phospho-ribonucleoside-RNA + 2 S-adenosyl-L-methionine = a 5'-end (5'-bismethylphospho)-ribonucleoside-RNA + 2 S-adenosyl-L-homocysteine. In terms of biological role, O-methyltransferase that specifically monomethylates 5'-monophosphate of cytoplasmic histidyl tRNA (tRNA(His)), acting as a capping enzyme by protecting tRNA(His) from cleavage by DICER1. Also able, with less efficiently, to methylate the 5' monophosphate of a subset of pre-miRNAs, acting as a negative regulator of miRNA processing. The 5' monophosphate of pre-miRNAs is recognized by DICER1 and is required for pre-miRNAs processing: methylation at this position reduces the processing of pre-miRNAs by DICER1. Was also reported to mediate dimethylation of pre-miR-145; however dimethylation cannot be reproduced by another group which observes a monomethylation of pre-miR-145. The sequence is that of Pre-miRNA 5'-monophosphate methyltransferase (bcdin3d) from Danio rerio (Zebrafish).